Reading from the N-terminus, the 277-residue chain is uncharacterized protein (277 aa).

32-39 serves as a coordination point for ATP; it reads GPQGSGKS.

It belongs to the GLYK kinase family.

The protein localises to the cytoplasm. It is found in the nucleus. Its function is as follows. Has a role in meiosis. This is an uncharacterized protein from Schizosaccharomyces pombe (strain 972 / ATCC 24843) (Fission yeast).